A 325-amino-acid polypeptide reads, in one-letter code: Olfactory receptor 1S2 (325 aa).

Residues 1–38 (MKTLCSFLQISRNMHQENQTTITEFILLGLSNQAEHQN) are Extracellular-facing. N18 carries an N-linked (GlcNAc...) asparagine glycan. The chain crosses the membrane as a helical span at residues 39 to 62 (LLFVLFLSMYVVTVVGNGLIIVAI). Over 63 to 70 (SLDIYLHT) the chain is Cytoplasmic. The chain crosses the membrane as a helical span at residues 71–92 (PMYLFLAYLSFADISSISNSVP). The Extracellular segment spans residues 93-113 (KMLVNIQTNSQSISYESCITQ). C110 and C202 form a disulfide bridge. A helical transmembrane segment spans residues 114-133 (MYFSIVFVVTDNLLLGTMAF). Residues 134 to 152 (DHFVAICHPLNYTTFMRAR) are Cytoplasmic-facing. A helical transmembrane segment spans residues 153–171 (FGTLLTVISWFLSNIIALT). Residues 172–208 (HTLLLIQLLFCDHNTLPHFFCDLAPLLKLSCSDTMIN) are Extracellular-facing. Residues 209 to 232 (ELVLFIVGLSVIIFPFVLIFFSYV) traverse the membrane as a helical segment. At 233 to 249 (CIIRAVLGVSSTQGKWK) the chain is on the cytoplasmic side. The chain crosses the membrane as a helical span at residues 250 to 272 (AFSTCGSHLTIALLFYGTTVGVY). Over 273–285 (FFPSSTHPEDTDK) the chain is Extracellular. A helical transmembrane segment spans residues 286–305 (IGAVLFTVVTPMMNPFIYSL). Over 306-325 (RNKDMKGALRKLINRKISSL) the chain is Cytoplasmic.

This sequence belongs to the G-protein coupled receptor 1 family.

It is found in the cell membrane. In terms of biological role, odorant receptor. This Homo sapiens (Human) protein is Olfactory receptor 1S2 (OR1S2).